We begin with the raw amino-acid sequence, 276 residues long: Large ribosomal subunit protein uL2 (276 aa).

The tract at residues 212–276 (NRHRGIRPQT…KLIISRKKHK (65 aa)) is disordered. The span at 257–276 (YKTRKKKASDKLIISRKKHK) shows a compositional bias: basic residues.

Belongs to the universal ribosomal protein uL2 family. Part of the 50S ribosomal subunit. Forms a bridge to the 30S subunit in the 70S ribosome.

In terms of biological role, one of the primary rRNA binding proteins. Required for association of the 30S and 50S subunits to form the 70S ribosome, for tRNA binding and peptide bond formation. It has been suggested to have peptidyltransferase activity; this is somewhat controversial. Makes several contacts with the 16S rRNA in the 70S ribosome. In Helicobacter pylori (strain P12), this protein is Large ribosomal subunit protein uL2.